The sequence spans 349 residues: KH domain-containing, RNA-binding, signal transduction-associated protein 2 (349 aa).

The 71-residue stretch at 65-135 (LIPVKQYPKF…HLSDELHVLI (71 aa)) folds into the KH domain. Disordered stretches follow at residues 182 to 284 (EDSG…DDQT) and 319 to 349 (PEEW…YGRY). An omega-N-methylarginine mark is found at Arg-230 and Arg-240. Basic and acidic residues predominate over residues 340 to 349 (GYREHPYGRY).

It belongs to the KHDRBS family. As to quaternary structure, self-associates to form homooligomers. Interacts with KHDRBS1/SAM68; heterooligomer formation of KHDRBS family proteins may modulate RNA substrate specificity. Interacts with RBMX. Interacts with SAFB, SFRS9 and YTHDC1. Interacts with FYN and PLCG1 (via SH3 domain). Interacts (phosphorylated) with FYN, GRB2, PLCG1 and RASA1 (via SH2 domain). Post-translationally, methylated. In terms of processing, tyrosine phosphorylated by FYN, PTK6 and SRC. Tyrosine phosphorylated by SRC during mitosis. Highly expressed in brain, lung, kidney and small intestine. Weakly expressed in placenta, liver, spleen, thymus, ovary and colon.

It is found in the nucleus. In terms of biological role, RNA-binding protein that plays a role in the regulation of alternative splicing and influences mRNA splice site selection and exon inclusion. Binds both poly(A) and poly(U) homopolymers. Phosphorylation by PTK6 inhibits its RNA-binding ability. Induces an increased concentration-dependent incorporation of exon in CD44 pre-mRNA by direct binding to purine-rich exonic enhancer. Can regulate alternative splicing of NRXN1 in the laminin G-like domain 6 containing the evolutionary conserved neurexin alternative spliced segment 4 (AS4) involved in neurexin selective targeting to postsynaptic partners. Regulates cell-type specific alternative splicing of NRXN1 at AS4 and acts synergystically with SAM68 in exon skipping. In contrast acts antagonistically with SAM68 in NRXN3 exon skipping at AS4. Its phosphorylation by FYN inhibits its ability to regulate splice site selection. May function as an adapter protein for Src kinases during mitosis. This Homo sapiens (Human) protein is KH domain-containing, RNA-binding, signal transduction-associated protein 2 (KHDRBS2).